A 1661-amino-acid chain; its full sequence is Pentafunctional AROM polypeptide (1661 aa).

A 3-dehydroquinate synthase region spans residues methionine 1 to aspartate 388. NAD(+)-binding positions include aspartate 50 to asparagine 52, glutamate 87 to lysine 90, glycine 118 to valine 120, and aspartate 123. Arginine 134 contacts 7-phospho-2-dehydro-3-deoxy-D-arabino-heptonate. Threonine 143–threonine 144 lines the NAD(+) pocket. 7-phospho-2-dehydro-3-deoxy-D-arabino-heptonate-binding residues include aspartate 150 and lysine 156. Lysine 165 is a binding site for NAD(+). Asparagine 166 contributes to the 7-phospho-2-dehydro-3-deoxy-D-arabino-heptonate binding site. Residues phenylalanine 183–threonine 186 and asparagine 194 contribute to the NAD(+) site. Glutamate 198 contributes to the Zn(2+) binding site. 7-phospho-2-dehydro-3-deoxy-D-arabino-heptonate-binding positions include glutamate 198–lysine 201 and lysine 254. The Proton acceptor; for 3-dehydroquinate synthase activity role is filled by glutamate 264. Residues arginine 268 to asparagine 272 and histidine 275 contribute to the 7-phospho-2-dehydro-3-deoxy-D-arabino-heptonate site. Zn(2+) is bound at residue histidine 275. Catalysis depends on histidine 279, which acts as the Proton acceptor; for 3-dehydroquinate synthase activity. Positions 291 and 360 each coordinate 7-phospho-2-dehydro-3-deoxy-D-arabino-heptonate. Histidine 291 serves as a coordination point for Zn(2+). An EPSP synthase region spans residues valine 401 to alanine 850. Cysteine 832 acts as the For EPSP synthase activity in catalysis. The segment at glutamine 872–cysteine 1064 is shikimate kinase. Glycine 879 to threonine 886 contacts ATP. The tract at residues leucine 1065–aspartate 1285 is 3-dehydroquinase. Histidine 1188 serves as the catalytic Proton acceptor; for 3-dehydroquinate dehydratase activity. The active-site Schiff-base intermediate with substrate; for 3-dehydroquinate dehydratase activity is the lysine 1216. The shikimate dehydrogenase stretch occupies residues threonine 1298–tryptophan 1661.

It in the N-terminal section; belongs to the sugar phosphate cyclases superfamily. Dehydroquinate synthase family. This sequence in the 2nd section; belongs to the EPSP synthase family. In the 3rd section; belongs to the shikimate kinase family. The protein in the 4th section; belongs to the type-I 3-dehydroquinase family. It in the C-terminal section; belongs to the shikimate dehydrogenase family. In terms of assembly, homodimer. The cofactor is Zn(2+).

It is found in the cytoplasm. The enzyme catalyses 7-phospho-2-dehydro-3-deoxy-D-arabino-heptonate = 3-dehydroquinate + phosphate. The catalysed reaction is 3-dehydroquinate = 3-dehydroshikimate + H2O. It carries out the reaction shikimate + NADP(+) = 3-dehydroshikimate + NADPH + H(+). It catalyses the reaction shikimate + ATP = 3-phosphoshikimate + ADP + H(+). The enzyme catalyses 3-phosphoshikimate + phosphoenolpyruvate = 5-O-(1-carboxyvinyl)-3-phosphoshikimate + phosphate. The protein operates within metabolic intermediate biosynthesis; chorismate biosynthesis; chorismate from D-erythrose 4-phosphate and phosphoenolpyruvate: step 2/7. Its pathway is metabolic intermediate biosynthesis; chorismate biosynthesis; chorismate from D-erythrose 4-phosphate and phosphoenolpyruvate: step 3/7. It functions in the pathway metabolic intermediate biosynthesis; chorismate biosynthesis; chorismate from D-erythrose 4-phosphate and phosphoenolpyruvate: step 4/7. It participates in metabolic intermediate biosynthesis; chorismate biosynthesis; chorismate from D-erythrose 4-phosphate and phosphoenolpyruvate: step 5/7. The protein operates within metabolic intermediate biosynthesis; chorismate biosynthesis; chorismate from D-erythrose 4-phosphate and phosphoenolpyruvate: step 6/7. In terms of biological role, the AROM polypeptide catalyzes 5 consecutive enzymatic reactions in prechorismate polyaromatic amino acid biosynthesis. The chain is Pentafunctional AROM polypeptide from Phaeosphaeria nodorum (strain SN15 / ATCC MYA-4574 / FGSC 10173) (Glume blotch fungus).